The following is a 306-amino-acid chain: Dihydroorotate dehydrogenase B (NAD(+)), catalytic subunit (306 aa).

FMN is bound by residues Ser-22 and 46 to 47; that span reads KG. Residues Lys-46 and 70–74 each bind substrate; that span reads NAIGL. FMN is bound by residues Asn-100 and Asn-128. A substrate-binding site is contributed by Asn-128. The active-site Nucleophile is the Cys-131. FMN contacts are provided by Lys-167 and Ile-193. Residue 194 to 195 coordinates substrate; that stretch reads NT. Residues Gly-219, 245-246, and 267-268 each bind FMN; these read GG and GT.

Belongs to the dihydroorotate dehydrogenase family. Type 1 subfamily. In terms of assembly, heterotetramer of 2 PyrK and 2 PyrD type B subunits. The cofactor is FMN.

It localises to the cytoplasm. The catalysed reaction is (S)-dihydroorotate + NAD(+) = orotate + NADH + H(+). It participates in pyrimidine metabolism; UMP biosynthesis via de novo pathway; orotate from (S)-dihydroorotate (NAD(+) route): step 1/1. Functionally, catalyzes the conversion of dihydroorotate to orotate with NAD(+) as electron acceptor. This is Dihydroorotate dehydrogenase B (NAD(+)), catalytic subunit (pyrD) from Solidesulfovibrio magneticus (strain ATCC 700980 / DSM 13731 / RS-1) (Desulfovibrio magneticus).